A 280-amino-acid chain; its full sequence is MAIHLYKTSTPSTRNGAVDSQVKSNPRNNLIYGQHRCGKGRNARGIITAGHRGGGHKRLYRKIDFRRNKKNIEGRIVTIEYDPNRNAYICLIHYGDGEKRYILHPRGAIIGDSIVSGTEVSIKMGNALRLGNALPLTDMPLGTAIHNIEITLGKGGQLARAAGAVAKLIAKEGKSATLKLPSGEVRLISKNCSATFGQVGNVGVNQKSLGRAGSKCWLGKRPVVRGVVMNPVDHPHGGGEGRAPIGRKNPTTPWGYPALGRRSRKRNKYSDSLILRRRTK.

Disordered regions lie at residues 1–25 and 231–280; these read MAIHLYKTSTPSTRNGAVDSQVKSN and PVDH…RRTK.

This sequence belongs to the universal ribosomal protein uL2 family. In terms of assembly, part of the 50S ribosomal subunit.

It is found in the plastid. It localises to the chloroplast. This chain is Large ribosomal subunit protein uL2cz/uL2cy (rpl2-A), found in Platanus occidentalis (Sycamore).